The following is a 571-amino-acid chain: Septation ring formation regulator EzrA (571 aa).

Residues 1-3 (MYY) lie on the Extracellular side of the membrane. Residues 4-22 (MLIGFIIVVIAVIGAGYIL) traverse the membrane as a helical segment. Residues 23–571 (KRKHYQRINE…ESKVSVDDIE (549 aa)) are Cytoplasmic-facing. Coiled-coil stretches lie at residues 248-298 (LAQM…DTLE), 326-374 (DALA…ASGE), 400-437 (KFAEELRSLRKDELEARDDAERMRRAIITLDRKMERER), and 478-529 (RIAE…ENHF).

The protein belongs to the EzrA family.

It is found in the cell membrane. In terms of biological role, negative regulator of FtsZ ring formation; modulates the frequency and position of FtsZ ring formation. Inhibits FtsZ ring formation at polar sites. Interacts either with FtsZ or with one of its binding partners to promote depolymerization. The protein is Septation ring formation regulator EzrA of Listeria monocytogenes serovar 1/2a (strain ATCC BAA-679 / EGD-e).